Consider the following 137-residue polypeptide: Small ribosomal subunit protein uS12 (137 aa).

The segment at 1–57 (MPTINQLIRKGRKSKGSKSNSPALNFGYNSYKKVQTNNSAPQKRGVATRVGTMTPKK) is disordered. The segment covering 32–41 (KKVQTNNSAP) has biased composition (polar residues). Position 102 is a 3-methylthioaspartic acid (Asp102).

Belongs to the universal ribosomal protein uS12 family. Part of the 30S ribosomal subunit. Contacts proteins S8 and S17. May interact with IF1 in the 30S initiation complex.

Functionally, with S4 and S5 plays an important role in translational accuracy. Its function is as follows. Interacts with and stabilizes bases of the 16S rRNA that are involved in tRNA selection in the A site and with the mRNA backbone. Located at the interface of the 30S and 50S subunits, it traverses the body of the 30S subunit contacting proteins on the other side and probably holding the rRNA structure together. The combined cluster of proteins S8, S12 and S17 appears to hold together the shoulder and platform of the 30S subunit. In Ligilactobacillus salivarius (strain UCC118) (Lactobacillus salivarius), this protein is Small ribosomal subunit protein uS12.